Here is a 149-residue protein sequence, read N- to C-terminus: Large ribosomal subunit protein bL9 (149 aa).

The protein belongs to the bacterial ribosomal protein bL9 family.

In terms of biological role, binds to the 23S rRNA. In Fervidobacterium nodosum (strain ATCC 35602 / DSM 5306 / Rt17-B1), this protein is Large ribosomal subunit protein bL9.